The primary structure comprises 206 residues: uncharacterized protein (206 aa).

The helical transmembrane segment at 166–186 (FYTGLSVIVGGATALALGLFF) threads the bilayer.

Its subcellular location is the membrane. This is an uncharacterized protein from Dictyostelium discoideum (Social amoeba).